The chain runs to 251 residues: Small ribosomal subunit protein uS3 (251 aa).

A KH type-2 domain is found at 22 to 93 (LNEFFTRELA…GIAIYAERVE (72 aa)). Residues 223-251 (TVKSYKQTAEDETETDAPVEAEAEVEATA) are disordered. Residues 232 to 251 (EDETETDAPVEAEAEVEATA) show a composition bias toward acidic residues.

It belongs to the universal ribosomal protein uS3 family. In terms of assembly, component of the small ribosomal subunit. Mature ribosomes consist of a small (40S) and a large (60S) subunit. The 40S subunit contains about 32 different proteins and 1 molecule of RNA (18S). The 60S subunit contains 45 different proteins and 3 molecules of RNA (25S, 5.8S and 5S).

The protein resides in the cytoplasm. In terms of biological role, component of the ribosome, a large ribonucleoprotein complex responsible for the synthesis of proteins in the cell. The small ribosomal subunit (SSU) binds messenger RNAs (mRNAs) and translates the encoded message by selecting cognate aminoacyl-transfer RNA (tRNA) molecules. The large subunit (LSU) contains the ribosomal catalytic site termed the peptidyl transferase center (PTC), which catalyzes the formation of peptide bonds, thereby polymerizing the amino acids delivered by tRNAs into a polypeptide chain. The nascent polypeptides leave the ribosome through a tunnel in the LSU and interact with protein factors that function in enzymatic processing, targeting, and the membrane insertion of nascent chains at the exit of the ribosomal tunnel. This chain is Small ribosomal subunit protein uS3 (RPS3), found in Candida albicans (strain SC5314 / ATCC MYA-2876) (Yeast).